Here is a 369-residue protein sequence, read N- to C-terminus: Coiled-coil domain-containing protein 149 (369 aa).

Residues 1–249 adopt a coiled-coil conformation; sequence MKENNNAEIL…AKYKQMAEAV (249 aa).

This sequence belongs to the CCDC149 family. As to expression, expressed in amphid and phasmid ciliated neurons, and also pharyngeal, touch receptor and motor neurons.

It is found in the cell projection. The protein localises to the cilium. The polypeptide is Coiled-coil domain-containing protein 149 (Caenorhabditis elegans).